The following is a 247-amino-acid chain: Protein-L-isoaspartate O-methyltransferase 2 (247 aa).

Serine 97 is a catalytic residue.

It belongs to the methyltransferase superfamily. L-isoaspartyl/D-aspartyl protein methyltransferase family.

Its subcellular location is the cytoplasm. It carries out the reaction [protein]-L-isoaspartate + S-adenosyl-L-methionine = [protein]-L-isoaspartate alpha-methyl ester + S-adenosyl-L-homocysteine. Functionally, catalyzes the methyl esterification of L-isoaspartyl residues in peptides and proteins that result from spontaneous decomposition of normal L-aspartyl and L-asparaginyl residues. It plays a role in the repair and/or degradation of damaged proteins. The polypeptide is Protein-L-isoaspartate O-methyltransferase 2 (Syntrophobacter fumaroxidans (strain DSM 10017 / MPOB)).